The following is a 977-amino-acid chain: GAS2-like protein pickled eggs (977 aa).

A Calponin-homology (CH) domain is found at glutamate 20–alanine 159. The interval valine 218–proline 245 is disordered. Positions aspartate 221–aspartate 236 are enriched in acidic residues. Residues asparagine 252–arginine 324 enclose the GAR domain. 5 disordered regions span residues proline 397–serine 543, alanine 557–glycine 624, valine 666–leucine 685, isoleucine 693–serine 803, and asparagine 910–tyrosine 977. Polar residues-rich tracts occupy residues leucine 399 to alanine 428 and alanine 436 to glycine 454. Gly residues predominate over residues glycine 502–glycine 527. Positions arginine 577–proline 589 are enriched in polar residues. Residues isoleucine 601–serine 620 show a composition bias toward acidic residues. Polar residues-rich tracts occupy residues valine 666–leucine 677 and threonine 731–proline 741. The segment covering serine 928–serine 953 has biased composition (low complexity).

This sequence belongs to the GAS2 family. Expressed in the ovary and the ring canals of the germline cells. In larvae, expressed in the notal region of the wing disk.

It localises to the cytoplasm. The protein localises to the cytoskeleton. It is found in the cell cortex. Essential for development and viability. Required for ovary development and oogenesis, and is essential for the development of the indirect flight muscles. May act as a negative regulator of the Notch signaling pathway in certain tissues, such as the muscle precursors and ovaries. May function as a linker protein between the actin and microtubule cytoskeletons. The protein is GAS2-like protein pickled eggs of Drosophila melanogaster (Fruit fly).